The following is a 428-amino-acid chain: D-amino acid dehydrogenase (428 aa).

Position 3–17 (3–17 (VVILGSGVVGVASAY)) interacts with FAD.

It belongs to the DadA oxidoreductase family. FAD is required as a cofactor.

It catalyses the reaction a D-alpha-amino acid + A + H2O = a 2-oxocarboxylate + AH2 + NH4(+). It participates in amino-acid degradation; D-alanine degradation; NH(3) and pyruvate from D-alanine: step 1/1. Its function is as follows. Oxidative deamination of D-amino acids. This chain is D-amino acid dehydrogenase, found in Burkholderia cenocepacia (strain ATCC BAA-245 / DSM 16553 / LMG 16656 / NCTC 13227 / J2315 / CF5610) (Burkholderia cepacia (strain J2315)).